The chain runs to 67 residues: Large ribosomal subunit protein uL29 (67 aa).

This sequence belongs to the universal ribosomal protein uL29 family.

The protein is Large ribosomal subunit protein uL29 of Exiguobacterium sp. (strain ATCC BAA-1283 / AT1b).